We begin with the raw amino-acid sequence, 509 residues long: Cobyric acid synthase (509 aa).

In terms of domain architecture, GATase cobBQ-type spans 262–459 (EIKVGIIKLP…IHGIFENDSW (198 aa)). Catalysis depends on C343, which acts as the Nucleophile. H451 is an active-site residue.

Belongs to the CobB/CobQ family. CobQ subfamily.

It functions in the pathway cofactor biosynthesis; adenosylcobalamin biosynthesis. Functionally, catalyzes amidations at positions B, D, E, and G on adenosylcobyrinic A,C-diamide. NH(2) groups are provided by glutamine, and one molecule of ATP is hydrogenolyzed for each amidation. This Prochlorococcus marinus (strain MIT 9215) protein is Cobyric acid synthase.